The primary structure comprises 160 residues: Nucleotide-binding protein VF_1240 (160 aa).

This sequence belongs to the YajQ family.

Its function is as follows. Nucleotide-binding protein. The polypeptide is Nucleotide-binding protein VF_1240 (Aliivibrio fischeri (strain ATCC 700601 / ES114) (Vibrio fischeri)).